The sequence spans 585 residues: Glutamine--tRNA ligase (585 aa).

Residues Pro-51–His-61 carry the 'HIGH' region motif. Residues Glu-52–Asn-54 and His-58–Ser-64 contribute to the ATP site. 2 residues coordinate L-glutamine: Asp-84 and Tyr-238. ATP is bound by residues Thr-257 and Arg-292 to Leu-293. Positions Ile-299–Arg-303 match the 'KMSKS' region motif.

Belongs to the class-I aminoacyl-tRNA synthetase family. In terms of assembly, monomer.

It localises to the cytoplasm. It carries out the reaction tRNA(Gln) + L-glutamine + ATP = L-glutaminyl-tRNA(Gln) + AMP + diphosphate. The polypeptide is Glutamine--tRNA ligase (Cupriavidus necator (strain ATCC 17699 / DSM 428 / KCTC 22496 / NCIMB 10442 / H16 / Stanier 337) (Ralstonia eutropha)).